The chain runs to 325 residues: SPbeta prophage-derived uncharacterized protein YopR (325 aa).

The polypeptide is SPbeta prophage-derived uncharacterized protein YopR (yopR) (Bacillus subtilis (strain 168)).